Here is a 102-residue protein sequence, read N- to C-terminus: Thioredoxin (102 aa).

Residues 2-102 (VTEIKSLKQL…KAKIVQLVSQ (101 aa)) enclose the Thioredoxin domain. Cysteines 30 and 33 form a disulfide.

Belongs to the thioredoxin family.

In terms of biological role, participates in various redox reactions through the reversible oxidation of its active center dithiol to a disulfide and catalyzes dithiol-disulfide exchange reactions. This Mycoplasma pneumoniae (strain ATCC 29342 / M129 / Subtype 1) (Mycoplasmoides pneumoniae) protein is Thioredoxin (trxA).